Here is a 658-residue protein sequence, read N- to C-terminus: Carnitine O-palmitoyltransferase 2, mitochondrial (658 aa).

Residues 1-25 (MVPRLLLRAWPRGPAVGPGAPSRPL) constitute a mitochondrion transit peptide. Over 26–178 (SAGSGPGQYL…GLLEPEVFHL (153 aa)) the chain is Mitochondrial matrix. Lysine 69 bears the N6-succinyllysine mark. Lysine 79 bears the N6-acetyllysine mark. The residue at position 85 (lysine 85) is an N6-succinyllysine. The segment at residues 179-208 (NPAKSDTDTFKRLIRFVPSSLSWYGAYLVN) is an intramembrane region (note=Mitochondrial inner membrane). Residues 209–658 (AYPLDMSQYF…DALEGKSIKS (450 aa)) lie on the Mitochondrial matrix side of the membrane. The residue at position 239 (lysine 239) is an N6-acetyllysine; alternate. N6-succinyllysine; alternate is present on lysine 239. N6-acetyllysine is present on lysine 305. Histidine 372 acts as the Proton acceptor in catalysis. Lysine 418 is modified (N6-acetyllysine; alternate). Lysine 418 bears the N6-succinyllysine; alternate mark. N6-succinyllysine is present on residues lysine 424 and lysine 439. 452–464 (GKEFLKKQKLSPD) serves as a coordination point for CoA. Residues tyrosine 486, serine 488, and threonine 499 each coordinate (R)-carnitine. An N6-acetyllysine; alternate mark is found at lysine 510 and lysine 544. 2 positions are modified to N6-succinyllysine; alternate: lysine 510 and lysine 544.

This sequence belongs to the carnitine/choline acetyltransferase family.

It localises to the mitochondrion inner membrane. The catalysed reaction is (R)-carnitine + hexadecanoyl-CoA = O-hexadecanoyl-(R)-carnitine + CoA. It carries out the reaction octanoyl-CoA + (R)-carnitine = O-octanoyl-(R)-carnitine + CoA. The enzyme catalyses decanoyl-CoA + (R)-carnitine = O-decanoyl-(R)-carnitine + CoA. It catalyses the reaction dodecanoyl-CoA + (R)-carnitine = O-dodecanoyl-R-carnitine + CoA. The catalysed reaction is tetradecanoyl-CoA + (R)-carnitine = O-tetradecanoyl-(R)-carnitine + CoA. It carries out the reaction (R)-carnitine + octadecanoyl-CoA = O-octadecanoyl-(R)-carnitine + CoA. The enzyme catalyses eicosanoyl-CoA + (R)-carnitine = O-eicosanoyl-(R)-carnitine + CoA. It catalyses the reaction (9Z)-tetradecenoyl-CoA + (R)-carnitine = O-(9Z)-tetradecenoyl-(R)-carnitine + CoA. The catalysed reaction is (5Z)-tetradecenoyl-CoA + (R)-carnitine = O-(5Z)-tetradecenoyl-(R)-carnitine + CoA. It carries out the reaction (R)-carnitine + (9Z)-octadecenoyl-CoA = O-(9Z)-octadecenoyl-(R)-carnitine + CoA. The enzyme catalyses 4,8-dimethylnonanoyl-CoA + (R)-carnitine = O-4,8-dimethylnonanoyl-(R)-carnitine + CoA. The protein operates within lipid metabolism; fatty acid beta-oxidation. Functionally, involved in the intramitochondrial synthesis of acylcarnitines from accumulated acyl-CoA metabolites. Reconverts acylcarnitines back into the respective acyl-CoA esters that can then undergo beta-oxidation, an essential step for the mitochondrial uptake of long-chain fatty acids and their subsequent beta-oxidation in the mitochondrion. Active with medium (C8-C12) and long-chain (C14-C18) acyl-CoA esters. The polypeptide is Carnitine O-palmitoyltransferase 2, mitochondrial (CPT2) (Macaca fascicularis (Crab-eating macaque)).